Here is a 297-residue protein sequence, read N- to C-terminus: AKT-interacting protein (297 aa).

Polar residues predominate over residues 1–13 (MNLNPFWSMSTNT). Residues 1–45 (MNLNPFWSMSTNTGRKRSDGEEQSGEQQQQQRASPARPSFGKKQL) form a disordered region. The segment covering 25–39 (GEQQQQQRASPARPS) has biased composition (low complexity). Residues 79 to 227 (YLEYSLLAEF…VVDSVKLCNS (149 aa)) form the UBC core domain. The tract at residues 262–297 (KRRPEDHHKGLQVSGLSWVKPGSTQPFSKDDNPPQN) is disordered.

This sequence belongs to the ubiquitin-conjugating enzyme family. FTS subfamily.

It is found in the cytoplasm. Its subcellular location is the cell membrane. Functionally, may function to promote vesicle trafficking and/or fusion. May also regulate apoptosis. This Salmo salar (Atlantic salmon) protein is AKT-interacting protein (aktip).